The primary structure comprises 341 residues: GTP-binding protein REM 2 (341 aa).

The span at 1 to 13 (MHTDLDTDMDMDT) shows a compositional bias: acidic residues. Disordered stretches follow at residues 1–71 (MHTD…GSMP) and 84–106 (VDEL…GSGE). The segment covering 18 to 30 (LCSSSSRQASPLG) has biased composition (polar residues). Ser-27 is modified (phosphoserine). The segment covering 90–106 (PPQASPSGSSDSLGSGE) has biased composition (low complexity). Residues 122 to 129 (GESGVGKS), 230 to 233 (NKSD), and 261 to 262 (AA) contribute to the GTP site. Residues 282–309 (RGRGHAGGQRPEPSSPDGPAPPTRRESL) are disordered. The segment covering 294–303 (PSSPDGPAPP) has biased composition (pro residues). Ser-296 is modified (phosphoserine).

It belongs to the small GTPase superfamily. RGK family.

It localises to the cell membrane. Binds GTP saturably and exhibits a low intrinsic rate of GTP hydrolysis. The protein is GTP-binding protein REM 2 (Rem2) of Mus musculus (Mouse).